Here is a 214-residue protein sequence, read N- to C-terminus: Ribonuclease HII (214 aa).

In terms of domain architecture, RNase H type-2 spans 26-214 (EIVCGVDEAG…PVREAFDLIR (189 aa)). A divalent metal cation contacts are provided by aspartate 32, glutamate 33, and aspartate 124.

This sequence belongs to the RNase HII family. It depends on Mn(2+) as a cofactor. Requires Mg(2+) as cofactor.

It is found in the cytoplasm. It catalyses the reaction Endonucleolytic cleavage to 5'-phosphomonoester.. Endonuclease that specifically degrades the RNA of RNA-DNA hybrids. The sequence is that of Ribonuclease HII from Burkholderia mallei (strain NCTC 10247).